Consider the following 388-residue polypeptide: Palmitoyltransferase ZDHHC18 (388 aa).

Positions 1–67 (MKDCEYQQIS…GSGSLGRRPR (67 aa)) are disordered. Residues 1–90 (MKDCEYQQIS…CGGRLMLAGH (90 aa)) lie on the Cytoplasmic side of the membrane. The span at 10–27 (SPGAAPLPASPGARRPGP) shows a compositional bias: low complexity. Residue S19 is modified to Phosphoserine. Residues 28-46 (AASPTPGPGPAPPAAPAPP) show a composition bias toward pro residues. A helical membrane pass occupies residues 91–111 (GGVFALTLLLILTTTGLFFVF). At 112 to 119 (DCPYLARK) the chain is on the lumenal side. Residues 120–140 (LTLAIPIIAAILFFFVMSCLL) traverse the membrane as a helical segment. Over 141–235 (QTSFTDPGIL…GNCVGRRNYR (95 aa)) the chain is Cytoplasmic. In terms of domain architecture, DHHC spans 192-242 (KYCFTCKMFRPPRTSHCSVCDNCVERFDHHCPWVGNCVGRRNYRFFYAFIL). C222 (S-palmitoyl cysteine intermediate) is an active-site residue. The chain crosses the membrane as a helical span at residues 236-256 (FFYAFILSLSFLTAFIFACVV). Residues 257 to 277 (THLTLRAQGSNFLSTLKETPA) lie on the Lumenal side of the membrane. Residues 278–298 (SVLELVICFFSIWSILGLSGF) form a helical membrane-spanning segment. Topologically, residues 299-388 (HTYLVASNLT…PDASMVGGHP (90 aa)) are cytoplasmic. Residues 364–388 (LPSPIRSDEPACRAKPDASMVGGHP) are disordered. Over residues 369-379 (RSDEPACRAKP) the composition is skewed to basic and acidic residues.

Belongs to the DHHC palmitoyltransferase family. ERF2/ZDHHC9 subfamily. In terms of tissue distribution, widely expressed.

The protein localises to the golgi apparatus membrane. The catalysed reaction is L-cysteinyl-[protein] + hexadecanoyl-CoA = S-hexadecanoyl-L-cysteinyl-[protein] + CoA. Functionally, palmitoyltransferase that catalyzes the addition of palmitate onto various protein substrates, such as CGAS, HRAS and LCK. Acts as a negative regulator of the cGAS-STING pathway be mediating palmitoylation and inactivation of CGAS. May also have a palmitoyltransferase activity toward the beta-2 adrenergic receptor/ADRB2 and therefore regulate G protein-coupled receptor signaling. This is Palmitoyltransferase ZDHHC18 from Homo sapiens (Human).